The following is a 534-amino-acid chain: Glucans biosynthesis protein D (534 aa).

The segment at residues 1–26 (MQRRDFIRNASLALAAFGLPSLPACA) is a signal peptide (tat-type signal).

The protein belongs to the OpgD/OpgG family. In terms of processing, predicted to be exported by the Tat system. The position of the signal peptide cleavage has not been experimentally proven.

It localises to the periplasm. It participates in glycan metabolism; osmoregulated periplasmic glucan (OPG) biosynthesis. Functionally, probably involved in the control of the structural glucose backbone of osmoregulated periplasmic glucans (OPGs). This is Glucans biosynthesis protein D from Stenotrophomonas maltophilia (strain K279a).